Reading from the N-terminus, the 509-residue chain is ATP synthase subunit alpha (509 aa).

169–176 (GDRQTGKT) is a binding site for ATP.

Belongs to the ATPase alpha/beta chains family. In terms of assembly, F-type ATPases have 2 components, CF(1) - the catalytic core - and CF(0) - the membrane proton channel. CF(1) has five subunits: alpha(3), beta(3), gamma(1), delta(1), epsilon(1). CF(0) has three main subunits: a(1), b(2) and c(9-12). The alpha and beta chains form an alternating ring which encloses part of the gamma chain. CF(1) is attached to CF(0) by a central stalk formed by the gamma and epsilon chains, while a peripheral stalk is formed by the delta and b chains.

The protein localises to the cell inner membrane. The catalysed reaction is ATP + H2O + 4 H(+)(in) = ADP + phosphate + 5 H(+)(out). Functionally, produces ATP from ADP in the presence of a proton gradient across the membrane. The alpha chain is a regulatory subunit. This chain is ATP synthase subunit alpha, found in Xanthobacter autotrophicus (strain ATCC BAA-1158 / Py2).